The primary structure comprises 1220 residues: DNA polymerase catalytic subunit (1220 aa).

2 disordered regions span residues Gly21–Gln43 and Gln641–Val691. The segment covering Ser646–Phe660 has biased composition (polar residues).

The protein belongs to the DNA polymerase type-B family. As to quaternary structure, forms a complex with the ssDNA-binding protein, the DNA polymerase processivity factor, and the alkaline exonuclease. Interacts with the helicase-primase complex composed of the primase, the helicase and the primase-associated factor; this interaction may coordinate leading and lagging strand DNA synthesis at the replication fork.

The protein resides in the host nucleus. The catalysed reaction is DNA(n) + a 2'-deoxyribonucleoside 5'-triphosphate = DNA(n+1) + diphosphate. It catalyses the reaction Endonucleolytic cleavage to 5'-phosphomonoester.. In terms of biological role, replicates viral genomic DNA. The replication complex is composed of six viral proteins: the DNA polymerase, processivity factor, primase, primase-associated factor, helicase, and ssDNA-binding protein. Additionally, the polymerase contains an intrinsic ribonuclease H (RNase H) activity that specifically degrades RNA/DNA heteroduplexes or duplex DNA substrates in the 5' to 3' direction. Therefore, it can catalyze the excision of the RNA primers that initiate the synthesis of Okazaki fragments at a replication fork during viral DNA replication. This chain is DNA polymerase catalytic subunit, found in Equine herpesvirus 1 (strain Ab4p) (EHV-1).